The sequence spans 493 residues: MTETSISGLRGPKSMYFMEIVDVSSQESSVLSSIVESFTSAVSASNLGVYSDEVLCDIKSSLKENSPITMLPNYNVSPTGDEHGQYLVIDLGGSTLRIAVVDISKPHPNLSRSERITIVVEKSWIIGNDFKRIDGEFFKYIGSKINEILMGQNVIDVKSVINTGITWSFPLETTDYNRGKIKHVSKGYTVGEDIYDKDLKMVLEDTLRQEYGLTLDVQSILNDSLAVYSAGCFIDSKMKLAMVLGTGINMCCSLKRSSDIHPSKMLADATLFNCELSLFGQNLCKDFATKYDIIIDKRFAGLSHHFKTFMEPDPITKTLFQPHELMTSGRYLPELTRLVVVDLIEAGEIFQNVDHQQMYQEYGGFSGELICFVHENDDYDDIHDKLCKAYGWTTVGLSDIVCLKEVVSCIIKRAAFIVANAIIAFFKLLGSDELGGDVTIGYVGSVLNYFHKYRRLIVEYVNSAEEAKGIKVDLKLIENSSIIGAAIGAAYHK.

Positions 27–490 constitute a Hexokinase domain; the sequence is ESSVLSSIVE…SIIGAAIGAA (464 aa). Positions 79-221 are hexokinase small subdomain; that stretch reads TGDEHGQYLV…GLTLDVQSIL (143 aa). The interval 222–479 is hexokinase large subdomain; that stretch reads NDSLAVYSAG…IKVDLKLIEN (258 aa).

This sequence belongs to the hexokinase family. In terms of assembly, interacts with histone deacetylase SIR2 under filamentation-inducing conditions.

It is found in the cytoplasm. Its subcellular location is the nucleus. The protein localises to the mitochondrion. The catalysed reaction is N-acetyl-D-glucosamine + ATP = N-acetyl-D-glucosamine 6-phosphate + ADP + H(+). The enzyme catalyses D-mannose + ATP = D-mannose 6-phosphate + ADP + H(+). It carries out the reaction D-glucose + ATP = D-glucose 6-phosphate + ADP + H(+). It catalyses the reaction D-glucosamine + ATP = D-glucosamine 6-phosphate + ADP + H(+). It participates in carbohydrate metabolism; hexose metabolism. Its pathway is carbohydrate degradation; glycolysis; D-glyceraldehyde 3-phosphate and glycerone phosphate from D-glucose: step 1/4. Component of the N-acetylglucosamine catabolic cascade that phosphorylates N-acetylglucosamine (GlcNAc), and allows the unique ability to utilise GlcNAc as carbon source. Converts GlcNAc to GlcNAc-6-P. Also able to phosphorylate glucose, glucosamine (GlcN), and mannose. Galactose, fructose, N-acetylmannosamine (ManNAc), mannosamine (ManN), galactosamine (GalN), and N-acetylgalactosamine (GalNAc) are not phosphorylated by HXK1. GlcNAc metabolism is closely associated with virulence and morphogenesis, and is involved in the cell wall synthesis. Acts both as a repressor and an activator of genes involved in maintaining cellular homeostasis. Contributes to white-opaque morphological transition and plays a role as a filamentation repressor. This is N-acetylglucosamine kinase 1 from Candida albicans (strain SC5314 / ATCC MYA-2876) (Yeast).